We begin with the raw amino-acid sequence, 379 residues long: Chaperone protein DnaJ (379 aa).

One can recognise a J domain in the interval 5 to 69 (EYYERLGVDK…QKRAAYDQYG (65 aa)). Residues 141–223 (GVEKQVKYNR…CHGSGHEKVA (83 aa)) form a CR-type zinc finger. Positions 154, 157, 171, 174, 197, 200, 211, and 214 each coordinate Zn(2+). 4 CXXCXGXG motif repeats span residues 154–161 (CHTCGGSG), 171–178 (CHKCGGRG), 197–204 (CDVCNGTG), and 211–218 (CETCHGSG).

The protein belongs to the DnaJ family. In terms of assembly, homodimer. Requires Zn(2+) as cofactor.

It is found in the cytoplasm. Participates actively in the response to hyperosmotic and heat shock by preventing the aggregation of stress-denatured proteins and by disaggregating proteins, also in an autonomous, DnaK-independent fashion. Unfolded proteins bind initially to DnaJ; upon interaction with the DnaJ-bound protein, DnaK hydrolyzes its bound ATP, resulting in the formation of a stable complex. GrpE releases ADP from DnaK; ATP binding to DnaK triggers the release of the substrate protein, thus completing the reaction cycle. Several rounds of ATP-dependent interactions between DnaJ, DnaK and GrpE are required for fully efficient folding. Also involved, together with DnaK and GrpE, in the DNA replication of plasmids through activation of initiation proteins. This Lactococcus lactis subsp. lactis (strain IL1403) (Streptococcus lactis) protein is Chaperone protein DnaJ.